The sequence spans 729 residues: Ran-binding protein 9 (729 aa).

The span at 1–11 shows a compositional bias: pro residues; that stretch reads MSGQPPPPPPQ. The segment at 1 to 137 is disordered; the sequence is MSGQPPPPPP…SAAAPFPHGD (137 aa). Residues 27 to 49 are compositionally biased toward low complexity; that stretch reads LAPVSGVVLPAPPAVSAGSSPAG. Residues 50–60 show a composition bias toward gly residues; it reads SPGGGAGGEGL. The segment covering 70–93 has biased composition (pro residues); sequence HPPPPPPPATAAPPPPPPPPPPPA. Residues 107 to 126 show a composition bias toward low complexity; sequence GLAAGPGPAGGAPTPALVAG. Residues 147 to 334 form the B30.2/SPRY domain; sequence LQRRLKRLYP…VDANFGQHPF (188 aa). The region spanning 365 to 397 is the LisH domain; sequence WQTMIQKMVSSYLVHHGYCATAEAFARSTDQTV. Residues 401–407 are interaction with CALB1; sequence LASIKNR. Positions 403 to 460 constitute a CTLH domain; it reads SIKNRQRIQKLVLAGRMGEAIETTQQLYPSLLERNPNLLFTLKVRQFIEMVNGTDSEV. Lys405 carries the post-translational modification N6-acetyllysine. The tract at residues 461 to 489 is disordered; the sequence is RCLGGRSPKSQDSYPVSPRPFSSPSMSPS. Over residues 473-489 the composition is skewed to low complexity; it reads SYPVSPRPFSSPSMSPS. Residues Ser477 and Ser487 each carry the phosphoserine modification. The tract at residues 615 to 729 is interaction with FMR1; it reads AAIERMIHFG…AFATVEDYLH (115 aa).

It belongs to the RANBP9/10 family. Part of a complex consisting of RANBP9, MKLN1 and GID8. Identified in the CTLH complex that contains GID4, RANBP9 and/or RANBP10, MKLN1, MAEA, RMND5A (or alternatively its paralog RMND5B), GID8, ARMC8, WDR26 and YPEL5. Within this complex, MAEA, RMND5A (or alternatively its paralog RMND5B), GID8, WDR26, and RANBP9 and/or RANBP10 form the catalytic core, while GID4, MKLN1, ARMC8 and YPEL5 have ancillary roles. Interacts with GTP-bound Ran, AR, CDC2L1/p110C, CALB1, S100A7, USP11, MKLN1, SOS1 or SOS2, GID8, and FMR1. Interacts with the Dyrk kinases HIPK2, DYRK1A, and DYRK1B. Interacts with TP73 isoform Alpha but not with TP53. Interacts with the HGF receptor MET and the integrins ITGB1 and ITGB2, but not with ITGAL. Part of a complex consisting of RANBP9, RAN, DYRK1B and COPS5. Directly interacts with RANBP10. Interacts with YPEL5. Interacts with DDX4. Interacts with NGFR. Interacts with TEX19. Phosphorylated in response to stress. Can be phosphorylated by the cleaved p110 form of CDC2L1 (p110C). Post-translationally, ubiquitinated. Polyubiquitination targets the protein for rapid degradation via the ubiquitin system. Can be deubiquitinated by USP11. Ubiquitously expressed, with highest levels in testes, placenta, heart, and muscle, and lowest levels in lung. Within the brain, expressed predominantly by neurons in the gray matter of cortex, the granular layer of cerebellum and the Purkinje cells.

The protein localises to the cytoplasm. The protein resides in the nucleus. It localises to the cell membrane. Its function is as follows. May act as scaffolding protein, and as adapter protein to couple membrane receptors to intracellular signaling pathways. Acts as a mediator of cell spreading and actin cytoskeleton rearrangement. Core component of the CTLH E3 ubiquitin-protein ligase complex that selectively accepts ubiquitin from UBE2H and mediates ubiquitination and subsequent proteasomal degradation of the transcription factor HBP1. May be involved in signaling of ITGB2/LFA-1 and other integrins. Enhances HGF-MET signaling by recruiting Sos and activating the Ras pathway. Enhances dihydrotestosterone-induced transactivation activity of AR, as well as dexamethasone-induced transactivation activity of NR3C1, but not affect estrogen-induced transactivation. Stabilizes TP73 isoform Alpha, probably by inhibiting its ubiquitination, and increases its proapoptotic activity. Inhibits the kinase activity of DYRK1A and DYRK1B. Inhibits FMR1 binding to RNA. The sequence is that of Ran-binding protein 9 (RANBP9) from Homo sapiens (Human).